The chain runs to 134 residues: Interleukin-5 (134 aa).

An N-terminal signal peptide occupies residues 1–21 (MRMLLNLSLLALGAAYVSAFA). N-linked (GlcNAc...) asparagine glycans are attached at residues N76 and N90.

This sequence belongs to the IL-5 family. Homodimer; disulfide-linked. Interacts with IL5RA. Interacts with CSF2RB.

Its subcellular location is the secreted. Functionally, homodimeric cytokine expressed predominantly by T-lymphocytes and NK cells that plays an important role in the survival, differentiation, and chemotaxis of eosinophils. Also acts on activated and resting B-cells to induce immunoglobulin production, growth, and differentiation. Mechanistically, exerts its biological effects through a receptor composed of IL5RA subunit and the cytokine receptor common subunit beta/CSF2RB. Binding to the receptor leads to activation of various kinases including LYN, SYK and JAK2 and thereby propagates signals through the RAS-MAPK and JAK-STAT5 pathways respectively. In Canis lupus familiaris (Dog), this protein is Interleukin-5 (IL5).